We begin with the raw amino-acid sequence, 376 residues long: UPF0754 membrane protein SERP1382 (376 aa).

2 helical membrane-spanning segments follow: residues 4–24 (ILLV…TNMI) and 356–376 (TLGF…AIFV).

Belongs to the UPF0754 family.

The protein resides in the cell membrane. This chain is UPF0754 membrane protein SERP1382, found in Staphylococcus epidermidis (strain ATCC 35984 / DSM 28319 / BCRC 17069 / CCUG 31568 / BM 3577 / RP62A).